The chain runs to 171 residues: Ribosome maturation factor RimM (171 aa).

The region spanning 96–168 is the PRC barrel domain; the sequence is EDGFYDHELE…TATITPPEGL (73 aa).

The protein belongs to the RimM family. As to quaternary structure, binds ribosomal protein uS19.

The protein resides in the cytoplasm. Its function is as follows. An accessory protein needed during the final step in the assembly of 30S ribosomal subunit, possibly for assembly of the head region. Essential for efficient processing of 16S rRNA. May be needed both before and after RbfA during the maturation of 16S rRNA. It has affinity for free ribosomal 30S subunits but not for 70S ribosomes. The protein is Ribosome maturation factor RimM of Corynebacterium glutamicum (strain R).